The following is a 197-amino-acid chain: MNLGRLCRLLKPALLCGALAAPGLAGTMCASRDDWRCARSMHEFSAKDIDGHMVNLDKYRGFVCIVTNVASQUGKTEVNYTQLVDLHARYAECGVRILAFPCNQFGKQEPGSNEKIKEFAAGYNVKFDMFSKICVNGDDAHPLWKWMKIQPKGKGILGNAIKWNFTKFLIDKNGCVVKRYGPMEEPLVIEKDLPHYF.

Phosphoserine is present on S40. The active site involves U73. A non-standard amino acid (selenocysteine) is located at residue U73.

This sequence belongs to the glutathione peroxidase family. As to quaternary structure, monomer. Has a tendency to form higher mass oligomers. Interacts with FUNDC1; this interaction promotes GPX4 recruitment into mitochondria through TOM/TIM complex where it is degraded by mitophagy. In terms of tissue distribution, expressed very intensively in the testis and weakly in lung, heart, and cerebellum.

It is found in the mitochondrion. Its subcellular location is the cytoplasm. It catalyses the reaction a hydroperoxy polyunsaturated fatty acid + 2 glutathione = a hydroxy polyunsaturated fatty acid + glutathione disulfide + H2O. It carries out the reaction 2 glutathione + H2O2 = glutathione disulfide + 2 H2O. The enzyme catalyses tert-butyl hydroperoxide + 2 glutathione = tert-butanol + glutathione disulfide + H2O. The catalysed reaction is cumene hydroperoxide + 2 glutathione = 2-phenylpropan-2-ol + glutathione disulfide + H2O. It catalyses the reaction (9S)-hydroperoxy-(10E,12Z)-octadecadienoate + 2 glutathione = (9S)-hydroxy-(10E,12Z)-octadecadienoate + glutathione disulfide + H2O. It carries out the reaction (13S)-hydroperoxy-(9Z,11E)-octadecadienoate + 2 glutathione = (13S)-hydroxy-(9Z,11E)-octadecadienoate + glutathione disulfide + H2O. The enzyme catalyses (5S)-hydroperoxy-(6E,8Z,11Z,14Z)-eicosatetraenoate + 2 glutathione = (5S)-hydroxy-(6E,8Z,11Z,14Z)-eicosatetraenoate + glutathione disulfide + H2O. The catalysed reaction is (12R)-hydroperoxy-(5Z,8Z,10E,14Z)-eicosatetraenoate + 2 glutathione = (12R)-hydroxy-(5Z,8Z,10E,14Z)-eicosatetraenoate + glutathione disulfide + H2O. It catalyses the reaction (12S)-hydroperoxy-(5Z,8Z,10E,14Z)-eicosatetraenoate + 2 glutathione = (12S)-hydroxy-(5Z,8Z,10E,14Z)-eicosatetraenoate + glutathione disulfide + H2O. It carries out the reaction (15S)-hydroperoxy-(5Z,8Z,11Z,13E)-eicosatetraenoate + 2 glutathione = (15S)-hydroxy-(5Z,8Z,11Z,13E)-eicosatetraenoate + glutathione disulfide + H2O. The enzyme catalyses (5S)-hydroperoxy-(6E,8Z,11Z,14Z,17Z)-eicosapentaenoate + 2 glutathione = (5S)-hydroxy-(6E,8Z,11Z,14Z,17Z)-eicosapentaenoate + glutathione disulfide + H2O. The catalysed reaction is (12S)-hydroperoxy-(5Z,8Z,10E,14Z,17Z)-eicosapentaenoate + 2 glutathione = (12S)-hydroxy-(5Z,8Z,10E,14Z,17Z)-eicosapentaenoate + glutathione disulfide + H2O. It catalyses the reaction (15S)-hydroperoxy-(5Z,8Z,11Z,13E,17Z)-eicosapentaenoate + 2 glutathione = (15S)-hydroxy-(5Z,8Z,11Z,13E,17Z)-eicosapentaenoate + glutathione disulfide + H2O. It carries out the reaction (15S)-hydroperoxy-(11Z,13E)-eicosadienoate + 2 glutathione = (15S)-hydroxy-(11Z,13E)-eicosadienoate + glutathione disulfide + H2O. The enzyme catalyses (17S)-hydroperoxy-(4Z,7Z,10Z,13Z,15E,19Z)-docosahexaenoate + 2 glutathione = (17S)-hydroxy-(4Z,7Z,10Z,13Z,15E,19Z)-docosahexaenoate + glutathione disulfide + H2O. The catalysed reaction is a hydroperoxy-1,2-diacyl-glycero-3-phosphocholine + 2 glutathione = a hydroxy-1,2-diacyl-glycero-3-phosphocholine + glutathione disulfide + H2O. Essential antioxidant peroxidase that directly reduces phospholipid hydroperoxide even if they are incorporated in membranes and lipoproteins. Can also reduce fatty acid hydroperoxide, cholesterol hydroperoxide and thymine hydroperoxide. Plays a key role in protecting cells from oxidative damage by preventing membrane lipid peroxidation. Required to prevent cells from ferroptosis, a non-apoptotic cell death resulting from an iron-dependent accumulation of lipid reactive oxygen species. The presence of selenocysteine (Sec) versus Cys at the active site is essential for life: it provides resistance to overoxidation and prevents cells against ferroptosis. The presence of Sec at the active site is also essential for the survival of a specific type of parvalbumin-positive interneurons, thereby preventing against fatal epileptic seizures. May be required to protect cells from the toxicity of ingested lipid hydroperoxides. Required for normal sperm development and male fertility. Essential for maturation and survival of photoreceptor cells. Plays a role in a primary T-cell response to viral and parasitic infection by protecting T-cells from ferroptosis and by supporting T-cell expansion. Plays a role of glutathione peroxidase in platelets in the arachidonic acid metabolism. Reduces hydroperoxy ester lipids formed by a 15-lipoxygenase that may play a role as down-regulator of the cellular 15-lipoxygenase pathway. Can also reduce small soluble hydroperoxides such as H2O2, cumene hydroperoxide and tert-butyl hydroperoxide. In Macaca fuscata fuscata (Japanese macaque), this protein is Phospholipid hydroperoxide glutathione peroxidase.